Reading from the N-terminus, the 719-residue chain is B3 domain-containing protein Os03g0120900 (719 aa).

The TF-B3 DNA-binding region spans 7-110; the sequence is HHHFIKVMVG…HFMVLPFGLN (104 aa). Disordered regions lie at residues 328-381 and 412-443; these read RGSF…RSEQ and EEPQHNQGENEGNLDQVNNKETDEEQIERNAV. The segment covering 351 to 366 has biased composition (basic and acidic residues); the sequence is DSAENTLKERSEERQP. Over residues 416–430 the composition is skewed to polar residues; the sequence is HNQGENEGNLDQVNN.

The protein localises to the nucleus. The sequence is that of B3 domain-containing protein Os03g0120900 from Oryza sativa subsp. japonica (Rice).